The following is a 167-amino-acid chain: Protein FimG (167 aa).

An N-terminal signal peptide occupies residues 1 to 23; it reads MKWCKRGYVLAAILALASATIQA. Cysteine 39 and cysteine 77 are disulfide-bonded.

Belongs to the fimbrial protein family.

It is found in the fimbrium. Involved in regulation of length and mediation of adhesion of type 1 fimbriae (but not necessary for the production of fimbriae). Involved in the integration of FimH in the fimbriae. The sequence is that of Protein FimG (fimG) from Escherichia coli (strain K12).